The primary structure comprises 145 residues: Arginine repressor (145 aa).

This sequence belongs to the ArgR family.

Its subcellular location is the cytoplasm. It participates in amino-acid biosynthesis; L-arginine biosynthesis [regulation]. In terms of biological role, regulates arginine biosynthesis genes. In Solibacter usitatus (strain Ellin6076), this protein is Arginine repressor.